We begin with the raw amino-acid sequence, 156 residues long: Transcriptional repressor NrdR (156 aa).

The segment at Cys-3 to Cys-34 is a zinc-finger region. The ATP-cone domain occupies Leu-49–Asp-139.

This sequence belongs to the NrdR family. Zn(2+) serves as cofactor.

Its function is as follows. Negatively regulates transcription of bacterial ribonucleotide reductase nrd genes and operons by binding to NrdR-boxes. The protein is Transcriptional repressor NrdR of Ruegeria pomeroyi (strain ATCC 700808 / DSM 15171 / DSS-3) (Silicibacter pomeroyi).